The primary structure comprises 254 residues: Major prion protein (254 aa).

The signal sequence occupies residues 1 to 28; the sequence is MANLGYWLLALFVTTCTDVGLCKKRPKP. Residues 23 to 38 form an interaction with ADGRG6 region; it reads KKRPKPGGWNTGGSRY. Positions 23 to 231 are interaction with GRB2, ERI3 and SYN1; it reads KKRPKPGGWN…SQAYYDGRRS (209 aa). A disordered region spans residues 24 to 107; sequence KRPKPGGWNT…QWNKPSKPKT (84 aa). A run of 5 repeats spans residues 51-59, 60-67, 68-75, 76-83, and 84-91. The interval 51–91 is 5 X 8 AA tandem repeats of P-H-G-G-G-W-G-Q; it reads PQSGGTWGQPHGGGWGQPHGGGWGQPHGGGWGQPHGGGWSQ. Positions 55-95 are enriched in gly residues; sequence GTWGQPHGGGWGQPHGGGWGQPHGGGWGQPHGGGWSQGGGT. Cu(2+)-binding residues include His61, Gly62, Gly63, His69, Gly70, Gly71, His77, Gly78, Gly79, His85, Gly86, and Gly87. Cysteines 179 and 214 form a disulfide. Residues Asn181 and Asn197 are each glycosylated (N-linked (GlcNAc...) asparagine). A lipid anchor (GPI-anchor amidated serine) is attached at Ser231. Residues 232-254 constitute a propeptide, removed in mature form; sequence SAVLFSSPPVILLISFLIFLIVG.

It belongs to the prion family. Monomer and homodimer. Has a tendency to aggregate into amyloid fibrils containing a cross-beta spine, formed by a steric zipper of superposed beta-strands. Soluble oligomers may represent an intermediate stage on the path to fibril formation. Copper binding may promote oligomerization. Interacts with GRB2, APP, ERI3/PRNPIP and SYN1. Mislocalized cytosolically exposed PrP interacts with MGRN1; this interaction alters MGRN1 subcellular location and causes lysosomal enlargement. Interacts with APP. Interacts with KIAA1191. Interacts with ADGRG6.

Its subcellular location is the cell membrane. The protein localises to the golgi apparatus. Its function is as follows. Its primary physiological function is unclear. May play a role in neuronal development and synaptic plasticity. May be required for neuronal myelin sheath maintenance. May promote myelin homeostasis through acting as an agonist for ADGRG6 receptor. May play a role in iron uptake and iron homeostasis. Soluble oligomers are toxic to cultured neuroblastoma cells and induce apoptosis (in vitro). Association with GPC1 (via its heparan sulfate chains) targets PRNP to lipid rafts. Also provides Cu(2+) or Zn(2+) for the ascorbate-mediated GPC1 deaminase degradation of its heparan sulfate side chains. This chain is Major prion protein (Prnp), found in Rattus norvegicus (Rat).